Consider the following 358-residue polypeptide: Endo-1,4-beta-xylanase B (358 aa).

The first 17 residues, 1 to 17 (MRFSASLLLALTGSAAA), serve as a signal peptide directing secretion. Positions 40-352 (QGLDAAMKAA…KAAYNAFLRG (313 aa)) constitute a GH10 domain. N-linked (GlcNAc...) asparagine glycosylation occurs at Asn136. The active-site Proton donor is Glu166. The Nucleophile role is filled by Glu274.

This sequence belongs to the glycosyl hydrolase 10 (cellulase F) family.

The protein localises to the secreted. It carries out the reaction Endohydrolysis of (1-&gt;4)-beta-D-xylosidic linkages in xylans.. The protein operates within glycan degradation; xylan degradation. With respect to regulation, partial inhibition of activity is detected in the presence of Ag(+), Cu2(+) and SDS. Like most fungal xylanases, activity is completely inhibited by Hg(2+) since Hg(2+) could interact with tryptophan residues and oxidize the indole ring. Beta-mercaptoethanol enhances the enzymatic activity by counteracting the oxidation effects of the S-S linkage between cysteine residues. In terms of biological role, endo-1,4-beta-xylanase involved in the hydrolysis of xylan, a major structural heterogeneous polysaccharide found in plant biomass representing the second most abundant polysaccharide in the biosphere, after cellulose. Is more active on soluble wheat arabinoxylan (defined as 100%) than on birchwood xylan (75.4%) and beechwood xylan (70.8%), and less active on insoluble wheat arabinoxylan (17.4%). Xylose is the major hydrolysis product of XynB. The sequence is that of Endo-1,4-beta-xylanase B from Humicola insolens (Soft-rot fungus).